Here is a 391-residue protein sequence, read N- to C-terminus: N-acetylaspartylglutamate synthase A (391 aa).

The region spanning 115–300 (FQELAGHGVP…VGGIIADYTM (186 aa)) is the ATP-grasp domain. Residues Lys-154, 189–199 (QKYVKESHGKD), and Arg-215 each bind ATP. Residues Asp-260, Glu-273, and Asn-275 each coordinate Mg(2+). Mn(2+)-binding residues include Asp-260, Glu-273, and Asn-275. Ser-319 is subject to Phosphoserine. A compositionally biased stretch (polar residues) spans 341–350 (TINSGSTSSE). The disordered stretch occupies residues 341-379 (TINSGSTSSESEPELGEIRDSSASTMGAPPSMLPEPGYN).

Belongs to the RimK family. The cofactor is Mg(2+). It depends on Mn(2+) as a cofactor.

It localises to the cytoplasm. The enzyme catalyses N-acetyl-L-aspartate + L-glutamate + ATP = N-acetyl-L-aspartyl-L-glutamate + ADP + phosphate + H(+). It carries out the reaction N-acetyl-L-aspartate + 2 L-glutamate + 2 ATP = N-acetyl-L-aspartyl-L-glutamyl-L-glutamate + 2 ADP + 2 phosphate + 2 H(+). In terms of biological role, catalyzes the synthesis of N-acetyl-L-aspartyl-L-glutamate (NAAG) and N-acetyl-L-aspartyl-L-glutamyl-L-glutamate. The protein is N-acetylaspartylglutamate synthase A (RIMKLA) of Homo sapiens (Human).